A 1969-amino-acid polypeptide reads, in one-letter code: Myosin-3 (1969 aa).

A Myosin N-terminal SH3-like domain is found at 33–82 (DSKKNCWIPDPEDGFVAAEIQSTTGEQVTVVTVKGNQITVKKDQCQEMNP). The region spanning 86 to 791 (DKTEDMANLT…VLAKLEDLRD (706 aa)) is the Myosin motor domain. K130 carries the post-translational modification N6,N6,N6-trimethyllysine. 179-186 (GESGAGKT) contributes to the ATP binding site. Actin-binding stretches follow at residues 667 to 689 (LNNLMNMLYQTHPHFIRCIIPNE) and 770 to 784 (KVGETKIFFKAGVLA). One can recognise an IQ domain in the interval 794–823 (LSRIVTMFQSRIRSYLAKAEVRRRYEQQTG). Residues 857–1969 (KEQEAMGELA…IRSSSNARFL (1113 aa)) are a coiled coil. Disordered stretches follow at residues 942–966 (MQERNEDLARQKKKTDQELSDTKKH), 1006–1029 (NKEKKHQEESNRKLNEDLQSEEDK), 1131–1213 (LEEE…GDSV), and 1234–1255 (KSKLQRDLEESQHATDSEVRSR). Basic and acidic residues-rich tracts occupy residues 1137–1164 (AERNSRQKSDRSRSEAERELEELTERLE) and 1176–1197 (ANKKREAEIAKLRREKEEDSLN).

The protein belongs to the TRAFAC class myosin-kinesin ATPase superfamily. Myosin family. Muscle myosin is a hexameric protein that consists of 2 heavy chain subunits (MHC), 2 alkali light chain subunits (MLC) and 2 regulatory light chain subunits (MLC-2). Expressed in body wall muscles, neighboring vulval muscle cells and the contractile sheath covering the hermaphrodite gonad (myoepithelial sheath cells).

Its subcellular location is the cytoplasm. The protein localises to the myofibril. It localises to the sarcomere. It is found in the a band. Its function is as follows. Essential for muscle contraction. Involved in ovulation likely by regulating the contraction of gonadal myoepithelial sheath cells. The polypeptide is Myosin-3 (myo-3) (Caenorhabditis elegans).